Reading from the N-terminus, the 450-residue chain is GTPase Der (450 aa).

2 EngA-type G domains span residues 3–170 and 183–356; these read PTIA…LATG and LKIA…AECS. Residues 9–16, 56–60, 122–125, 189–196, 236–240, and 301–304 each bind GTP; these read GRPNVGKS, DTGGL, NKVD, GRPNAGKS, DTAGV, and NKID. One can recognise a KH-like domain in the interval 357-441; that stretch reads LRISTGQLNR…PLNIVFRSTF (85 aa).

The protein belongs to the TRAFAC class TrmE-Era-EngA-EngB-Septin-like GTPase superfamily. EngA (Der) GTPase family. In terms of assembly, associates with the 50S ribosomal subunit.

Functionally, GTPase that plays an essential role in the late steps of ribosome biogenesis. The protein is GTPase Der of Maridesulfovibrio salexigens (strain ATCC 14822 / DSM 2638 / NCIMB 8403 / VKM B-1763) (Desulfovibrio salexigens).